The chain runs to 430 residues: Enolase (430 aa).

Gln165 is a binding site for (2R)-2-phosphoglycerate. Glu207 (proton donor) is an active-site residue. Residues Asp244, Glu287, and Asp314 each coordinate Mg(2+). (2R)-2-phosphoglycerate-binding residues include Lys339, Arg368, Ser369, and Lys390. Lys339 acts as the Proton acceptor in catalysis.

This sequence belongs to the enolase family. In terms of assembly, component of the RNA degradosome, a multiprotein complex involved in RNA processing and mRNA degradation. It depends on Mg(2+) as a cofactor.

It localises to the cytoplasm. It is found in the secreted. The protein localises to the cell surface. The catalysed reaction is (2R)-2-phosphoglycerate = phosphoenolpyruvate + H2O. It functions in the pathway carbohydrate degradation; glycolysis; pyruvate from D-glyceraldehyde 3-phosphate: step 4/5. Catalyzes the reversible conversion of 2-phosphoglycerate (2-PG) into phosphoenolpyruvate (PEP). It is essential for the degradation of carbohydrates via glycolysis. In Xanthomonas euvesicatoria pv. vesicatoria (strain 85-10) (Xanthomonas campestris pv. vesicatoria), this protein is Enolase.